Reading from the N-terminus, the 149-residue chain is Calmodulin (149 aa).

Alanine 2 is subject to N-acetylalanine. EF-hand domains are found at residues 8–43, 44–79, 81–116, and 117–149; these read DQISEFKEAFSLFDKDGDGCITTKELGTVMRSLGQN, PTEAELQDMINEVDADGNGTIDFPEFLNLMARKMKD, DSEEELKEAFRVFDKDQNGFISAAELRHVMTNLGEK, and LTDEEVDEMIREADVDGDGQINYDEFVKVMMAK. 14 residues coordinate Ca(2+): aspartate 21, aspartate 23, aspartate 25, cysteine 27, glutamate 32, aspartate 57, aspartate 59, asparagine 61, threonine 63, glutamate 68, aspartate 94, aspartate 96, asparagine 98, and glutamate 105. Lysine 116 carries the post-translational modification N6,N6,N6-trimethyllysine. Aspartate 130, aspartate 132, aspartate 134, glutamine 136, and glutamate 141 together coordinate Ca(2+).

The protein belongs to the calmodulin family.

Its function is as follows. Calmodulin mediates the control of a large number of enzymes, ion channels and other proteins by Ca(2+). Among the enzymes to be stimulated by the calmodulin-Ca(2+) complex are a number of protein kinases and phosphatases. The polypeptide is Calmodulin (CCM1) (Capsicum annuum (Capsicum pepper)).